Here is a 299-residue protein sequence, read N- to C-terminus: Bifunctional protein FolD (299 aa).

NADP(+)-binding positions include 164-166 (GRS) and Ile234.

It belongs to the tetrahydrofolate dehydrogenase/cyclohydrolase family. Homodimer.

The enzyme catalyses (6R)-5,10-methylene-5,6,7,8-tetrahydrofolate + NADP(+) = (6R)-5,10-methenyltetrahydrofolate + NADPH. It carries out the reaction (6R)-5,10-methenyltetrahydrofolate + H2O = (6R)-10-formyltetrahydrofolate + H(+). It participates in one-carbon metabolism; tetrahydrofolate interconversion. In terms of biological role, catalyzes the oxidation of 5,10-methylenetetrahydrofolate to 5,10-methenyltetrahydrofolate and then the hydrolysis of 5,10-methenyltetrahydrofolate to 10-formyltetrahydrofolate. In Christiangramia forsetii (strain DSM 17595 / CGMCC 1.15422 / KT0803) (Gramella forsetii), this protein is Bifunctional protein FolD.